The following is a 79-amino-acid chain: Ponericin-W-like 32.1 (79 aa).

An N-terminal signal peptide occupies residues Met-1–Ala-23. A propeptide spanning residues Arg-49 to Asp-79 is cleaved from the precursor.

It belongs to the non-disulfide-bridged peptide (NDBP) superfamily. Medium-length antimicrobial peptide (group 3) family. Ponericin-W subfamily. As to expression, expressed by the venom gland.

It localises to the secreted. The protein resides in the target cell membrane. Antimicrobial peptide with potent activity against a range of Gram-positive and Gram-negative bacteria. Has high hemolytic activity against erythrocytes. May act by disrupting the integrity of the bacterial cell membrane. The sequence is that of Ponericin-W-like 32.1 from Lychas mucronatus (Chinese swimming scorpion).